A 350-amino-acid chain; its full sequence is Peptide-N(4)-(N-acetyl-beta-glucosaminyl)asparagine amidase (350 aa).

The Zn(2+) site is built by Cys-123, Cys-126, Cys-157, and Cys-160. The active-site Nucleophile is the Cys-183. Residues His-210 and Asp-227 contribute to the active site. Glu-230 is a binding site for substrate. Residues 324 to 350 (EIPPAAGAAGRQSGSADWKRQRGEDGR) form a disordered region. Residues 340 to 350 (DWKRQRGEDGR) show a composition bias toward basic and acidic residues.

This sequence belongs to the transglutaminase-like superfamily. PNGase family. Zn(2+) serves as cofactor.

The protein localises to the cytoplasm. It carries out the reaction Hydrolysis of an N(4)-(acetyl-beta-D-glucosaminyl)asparagine residue in which the glucosamine residue may be further glycosylated, to yield a (substituted) N-acetyl-beta-D-glucosaminylamine and a peptide containing an aspartate residue.. Its function is as follows. Specifically deglycosylates the denatured form of N-linked glycoproteins in the cytoplasm and assists their proteasome-mediated degradation. Cleaves the beta-aspartyl-glucosamine (GlcNAc) of the glycan and the amide side chain of Asn, converting Asn to Asp. Prefers proteins containing high-mannose over those bearing complex type oligosaccharides. Can recognize misfolded proteins in the endoplasmic reticulum that are exported to the cytosol to be destroyed and deglycosylate them, while it has no activity toward native proteins. Deglycosylation is a prerequisite for subsequent proteasome-mediated degradation of some, but not all, misfolded glycoproteins. The protein is Peptide-N(4)-(N-acetyl-beta-glucosaminyl)asparagine amidase (PNG1) of Eremothecium gossypii (strain ATCC 10895 / CBS 109.51 / FGSC 9923 / NRRL Y-1056) (Yeast).